The primary structure comprises 347 residues: tRNA N6-adenosine threonylcarbamoyltransferase (347 aa).

Fe cation-binding residues include His-113 and His-117. Substrate-binding positions include 136-140, Asp-170, Gly-183, Asp-187, and Asn-282; that span reads LVSGG. Asp-310 contacts Fe cation.

This sequence belongs to the KAE1 / TsaD family. It depends on Fe(2+) as a cofactor.

Its subcellular location is the cytoplasm. It carries out the reaction L-threonylcarbamoyladenylate + adenosine(37) in tRNA = N(6)-L-threonylcarbamoyladenosine(37) in tRNA + AMP + H(+). Functionally, required for the formation of a threonylcarbamoyl group on adenosine at position 37 (t(6)A37) in tRNAs that read codons beginning with adenine. Is involved in the transfer of the threonylcarbamoyl moiety of threonylcarbamoyl-AMP (TC-AMP) to the N6 group of A37, together with TsaE and TsaB. TsaD likely plays a direct catalytic role in this reaction. The chain is tRNA N6-adenosine threonylcarbamoyltransferase from Cutibacterium acnes (strain DSM 16379 / KPA171202) (Propionibacterium acnes).